We begin with the raw amino-acid sequence, 176 residues long: MNLPGPIHDFLLVFLGSGLILGGLGVVLLPNPIYSAFSLGFVLVCISLFYILLNSYFVAAAQLLIYVGAINVLIIFAVMFMNGSEYYKDFHLWTIGDGVTSVVCTGLFISLITTIPDMSWYGIIWTTKSNQILEQDLITNSQQIGVHLSTDFFLPFELVSIILLVALIGAIAVARQ.

5 helical membrane passes run 10-30 (FLLV…VLLP), 33-53 (IYSA…YILL), 61-81 (AQLL…VMFM), 92-112 (LWTI…ISLI), and 152-172 (FFLP…GAIA).

This sequence belongs to the complex I subunit 6 family. In terms of assembly, NDH is composed of at least 16 different subunits, 5 of which are encoded in the nucleus.

Its subcellular location is the plastid. It is found in the chloroplast thylakoid membrane. The enzyme catalyses a plastoquinone + NADH + (n+1) H(+)(in) = a plastoquinol + NAD(+) + n H(+)(out). It carries out the reaction a plastoquinone + NADPH + (n+1) H(+)(in) = a plastoquinol + NADP(+) + n H(+)(out). NDH shuttles electrons from NAD(P)H:plastoquinone, via FMN and iron-sulfur (Fe-S) centers, to quinones in the photosynthetic chain and possibly in a chloroplast respiratory chain. The immediate electron acceptor for the enzyme in this species is believed to be plastoquinone. Couples the redox reaction to proton translocation, and thus conserves the redox energy in a proton gradient. The chain is NAD(P)H-quinone oxidoreductase subunit 6, chloroplastic (ndhG) from Coffea arabica (Arabian coffee).